The following is a 388-amino-acid chain: Chorismate synthase (388 aa).

NADP(+) contacts are provided by R39 and R45. FMN is bound by residues 130-132 (RSS), 251-252 (NA), G296, 311-315 (KPIPT), and R337.

Belongs to the chorismate synthase family. Homotetramer. FMNH2 is required as a cofactor.

It catalyses the reaction 5-O-(1-carboxyvinyl)-3-phosphoshikimate = chorismate + phosphate. The protein operates within metabolic intermediate biosynthesis; chorismate biosynthesis; chorismate from D-erythrose 4-phosphate and phosphoenolpyruvate: step 7/7. Functionally, catalyzes the anti-1,4-elimination of the C-3 phosphate and the C-6 proR hydrogen from 5-enolpyruvylshikimate-3-phosphate (EPSP) to yield chorismate, which is the branch point compound that serves as the starting substrate for the three terminal pathways of aromatic amino acid biosynthesis. This reaction introduces a second double bond into the aromatic ring system. The chain is Chorismate synthase from Streptococcus pyogenes serotype M1.